We begin with the raw amino-acid sequence, 348 residues long: tRNA N6-adenosine threonylcarbamoyltransferase (348 aa).

Positions 115 and 119 each coordinate Fe cation. Substrate-binding positions include 137 to 141 (LASGG), aspartate 170, glycine 183, and asparagine 281. Aspartate 309 serves as a coordination point for Fe cation.

This sequence belongs to the KAE1 / TsaD family. It depends on Fe(2+) as a cofactor.

It localises to the cytoplasm. The enzyme catalyses L-threonylcarbamoyladenylate + adenosine(37) in tRNA = N(6)-L-threonylcarbamoyladenosine(37) in tRNA + AMP + H(+). Required for the formation of a threonylcarbamoyl group on adenosine at position 37 (t(6)A37) in tRNAs that read codons beginning with adenine. Is involved in the transfer of the threonylcarbamoyl moiety of threonylcarbamoyl-AMP (TC-AMP) to the N6 group of A37, together with TsaE and TsaB. TsaD likely plays a direct catalytic role in this reaction. This is tRNA N6-adenosine threonylcarbamoyltransferase from Methylobacterium sp. (strain 4-46).